Reading from the N-terminus, the 429-residue chain is Adenylosuccinate synthetase (429 aa).

GTP-binding positions include G12 to K18 and G40 to T42. Catalysis depends on D13, which acts as the Proton acceptor. D13 and G40 together coordinate Mg(2+). IMP is bound by residues D13–K16, N38–H41, T128, R142, Q223, T238, and R302. The Proton donor role is filled by H41. Position 298 to 304 (T298 to R304) interacts with substrate. GTP contacts are provided by residues R304, L330–D332, and S412–G414.

It belongs to the adenylosuccinate synthetase family. Homodimer. The cofactor is Mg(2+).

It is found in the cytoplasm. The catalysed reaction is IMP + L-aspartate + GTP = N(6)-(1,2-dicarboxyethyl)-AMP + GDP + phosphate + 2 H(+). The protein operates within purine metabolism; AMP biosynthesis via de novo pathway; AMP from IMP: step 1/2. In terms of biological role, plays an important role in the de novo pathway of purine nucleotide biosynthesis. Catalyzes the first committed step in the biosynthesis of AMP from IMP. This Lactobacillus acidophilus (strain ATCC 700396 / NCK56 / N2 / NCFM) protein is Adenylosuccinate synthetase.